A 589-amino-acid chain; its full sequence is Ectoderm-neural cortex protein 1 (589 aa).

The 69-residue stretch at 46–114 (TDVLLHAGNR…AYSSRVIINE (69 aa)) folds into the BTB domain. 6 Kelch repeats span residues 296–340 (ALFL…AIGC), 341–388 (KVYI…ELKH), 389–444 (CLYV…SAKL), 446–492 (LFAF…VLGN), 494–538 (IFIM…ASGN), and 539–585 (KLYV…STWK).

As to quaternary structure, binds to RB1. Hypophosphorylated RB1 associates with ENC1 during neuronal differentiation, while hyperphosphorylated RB1 associates with ENC1 in undifferentiating cells. Part of a complex that contains CUL3, RBX1 and ENC1. Interacts indirectly with KEAP1. Ubiquitinated by E3 ubiquitin ligase complex formed by CUL3 and RBX1 and probably targeted for proteasome-independent degradation. Quinone-induced oxidative stress increases its ubiquitination. Primarily expressed in the nervous system.

The protein resides in the nucleus matrix. It is found in the cytoplasm. It localises to the cytoskeleton. Its function is as follows. Actin-binding protein involved in the regulation of neuronal process formation and in differentiation of neural crest cells. Down-regulates transcription factor NF2L2/NRF2 by decreasing the rate of protein synthesis and not via a ubiquitin-mediated proteasomal degradation mechanism. The sequence is that of Ectoderm-neural cortex protein 1 (Enc1) from Mus musculus (Mouse).